The sequence spans 358 residues: Peptide chain release factor 1 (358 aa).

Residue Gln-233 is modified to N5-methylglutamine.

It belongs to the prokaryotic/mitochondrial release factor family. Methylated by PrmC. Methylation increases the termination efficiency of RF1.

It localises to the cytoplasm. Its function is as follows. Peptide chain release factor 1 directs the termination of translation in response to the peptide chain termination codons UAG and UAA. In Geobacillus kaustophilus (strain HTA426), this protein is Peptide chain release factor 1.